We begin with the raw amino-acid sequence, 85 residues long: MVKLRLKRCGRKQRAVYRIVAIDVRSRREGKDLRKVGFYDPIKNQTYLNVPAILYFLEKGAQPTGTVQDILKKAEVFKELRPNQS.

This sequence belongs to the bacterial ribosomal protein bS16 family.

The protein resides in the plastid. It is found in the chloroplast. The protein is Small ribosomal subunit protein bS16c of Nicotiana tabacum (Common tobacco).